The following is a 427-amino-acid chain: Trigger factor (427 aa).

A PPIase FKBP-type domain is found at 163–248; sequence GDVVNLDFDG…INEVKSKEVP (86 aa).

It belongs to the FKBP-type PPIase family. Tig subfamily.

Its subcellular location is the cytoplasm. The enzyme catalyses [protein]-peptidylproline (omega=180) = [protein]-peptidylproline (omega=0). Involved in protein export. Acts as a chaperone by maintaining the newly synthesized protein in an open conformation. Functions as a peptidyl-prolyl cis-trans isomerase. In Macrococcus caseolyticus (strain JCSC5402) (Macrococcoides caseolyticum), this protein is Trigger factor.